The sequence spans 705 residues: Variediene synthase (705 aa).

Positions 9 to 331 (LNSTLSSVVE…RCPRYHPWLC (323 aa)) are terpene cyclase. D100 is a Mg(2+) binding site. Substrate contacts are provided by residues D100, 186 to 189 (RIID), N230, 234 to 238 (SFDIE), and 325 to 326 (RY). A DDXXD 1 motif is present at residues 100–104 (DNVVE). An NSE/DTE motif is present at residues 230 to 238 (NDYFSFDIE). The interval 332–705 (KEAASLLHQD…VRLLIHRLKV (374 aa)) is prenyltransferase. Residues 349–366 (GRKPQALEEYRSRSHSES) show a composition bias toward basic and acidic residues. Residues 349-374 (GRKPQALEEYRSRSHSESDLSDASPT) form a disordered region. K424, R427, and H456 together coordinate isopentenyl diphosphate. Positions 463 and 467 each coordinate Mg(2+). A DDXXD 2 motif is present at residues 463-467 (DDIED). R472 serves as a coordination point for dimethylallyl diphosphate. R473 serves as a coordination point for isopentenyl diphosphate. Residues K550, T551, Q589, N596, K605, and K615 each coordinate dimethylallyl diphosphate.

It in the N-terminal section; belongs to the terpene synthase family. In the C-terminal section; belongs to the FPP/GGPP synthase family. As to quaternary structure, hexamer. Requires Mg(2+) as cofactor.

The enzyme catalyses isopentenyl diphosphate + (2E,6E)-farnesyl diphosphate = (2E,6E,10E)-geranylgeranyl diphosphate + diphosphate. The catalysed reaction is isopentenyl diphosphate + (2E,6E,10E)-geranylgeranyl diphosphate = (2E,6E,10E,14E)-geranylfarnesyl diphosphate + diphosphate. It carries out the reaction (2E,6E,10E)-geranylgeranyl diphosphate = variediene + diphosphate. It catalyses the reaction (2E,6E,10E,14E)-geranylfarnesyl diphosphate = (R,2E)-alpha-cericerene + diphosphate. It participates in secondary metabolite biosynthesis; terpenoid biosynthesis. In terms of biological role, bifunctional terpene synthase that converts dimethylallyl diphosphate (DMAPP) and isopentenyl diphosphate (IPP) into variediene as a single product. The C-terminal prenyltransferase (PT) domain of EvVS catalyzes formation of geranylgeranyl pyrophosphate (GGPP), whereas the N-terminal terpene cyclase (TC) domain catalyzes the cyclization of GGPP to variediene. The PT domain can also synthesize geranylfarnesyl pyrophosphate (GFPP) from the C5 isoprene units in vitro, while the TC domain is able to cyclize GFPP to the sesterterpene (2E)-alpha-cericerene. The sequence is that of Variediene synthase from Emericella variicolor (Aspergillus stellatus).